The chain runs to 873 residues: Calmodulin-dependent glutamylase SidJ (873 aa).

The disordered stretch occupies residues 16–90 (QSEDNPSETA…TTSTTKQKGP (75 aa)). The span at 22–58 (SETAVETTDVSTKIKTTDTTQEESSVKTKTVVPTQPG) shows a compositional bias: polar residues. Residues Asp542 and Asp545 each coordinate Mg(2+). The interval 851 to 873 (NLSEKSDIDSEKPESERTTDKRL) is disordered.

As to quaternary structure, interacts with host calmodulin/CALM1; this interaction is required for glutamylase activity. Mg(2+) serves as cofactor.

The enzyme catalyses L-glutamyl-[protein] + L-glutamate + ATP = gamma-L-glutamyl-L-glutamyl-[protein] + ADP + phosphate + H(+). It carries out the reaction (L-glutamyl)(n)-gamma-L-glutamyl-L-glutamyl-[protein] + L-glutamate + ATP = (L-glutamyl)(n+1)-gamma-L-glutamyl-L-glutamyl-[protein] + ADP + phosphate + H(+). Glytamylation catalyzed by SidJ requires host calmodulin and can be regulated by intracellular changes in Ca2+ concentrations. Also requires ATP. In terms of biological role, glutamylase that mediates the covalent attachment of glutamate moieties to SdeA on one of the catalytic residues that is required for its mono-ADP-ribosyltransferase activity. In turn, inhibits SdeA ubiquitinating activity. Also glutamylates related SdeB, SdeC and SidE. Glutamylase activity only occurs in the host since it requires host calmodulin. May also reverse the SdeA-mediated substrate ubiquitination by cleaving the phosphodiester bond that links phosphoribosylated ubiquitin to protein substrates via its deubiquitinase activity. The chain is Calmodulin-dependent glutamylase SidJ from Legionella pneumophila subsp. pneumophila (strain Philadelphia 1 / ATCC 33152 / DSM 7513).